The following is a 330-amino-acid chain: Aspartate--ammonia ligase (330 aa).

It belongs to the class-II aminoacyl-tRNA synthetase family. AsnA subfamily.

It localises to the cytoplasm. It catalyses the reaction L-aspartate + NH4(+) + ATP = L-asparagine + AMP + diphosphate + H(+). Its pathway is amino-acid biosynthesis; L-asparagine biosynthesis; L-asparagine from L-aspartate (ammonia route): step 1/1. This is Aspartate--ammonia ligase from Escherichia coli (strain SMS-3-5 / SECEC).